A 184-amino-acid polypeptide reads, in one-letter code: Ribosome-recycling factor (184 aa).

Belongs to the RRF family.

It is found in the cytoplasm. Its function is as follows. Responsible for the release of ribosomes from messenger RNA at the termination of protein biosynthesis. May increase the efficiency of translation by recycling ribosomes from one round of translation to another. The sequence is that of Ribosome-recycling factor from Clostridium botulinum (strain Langeland / NCTC 10281 / Type F).